The primary structure comprises 381 residues: MTHASNTHPVTELTKELIARPSVTPLDEGCQTLMAERLAAIGFNIEPMVFEDTTNMWARRGNEGPVFCFAGHTDVVPAGDLSRWHTPPFEPTIIDGYLYGRGAADMKGSLAAMIVATERFVAKHPNHPGSIAFLITSDEEGPFINGTTRVIDTLEARNEKITWALVGEPSSTLKLGDVVKNGRRGSLTANLTVKGIQGHVAYPHLADNPIHKAAPFLAELSQTHWDNGNEFFPPTSMQIANINGGTGASNVIPGTLEVMFNFRYSTEVTAEILIERVEALLTAHELDYDISWTFNGLPFLTGEGPLLDATRHAIRQITGYDTDPQTTGGTSDGRFIAPTGAKVLELGPVNATIHKVNECVKIDDLEQLALCYEVILEQLLC.

Residue histidine 72 coordinates Zn(2+). Aspartate 74 is a catalytic residue. Residue aspartate 105 participates in Zn(2+) binding. The active-site Proton acceptor is glutamate 139. Residues glutamate 140, glutamate 168, and histidine 354 each contribute to the Zn(2+) site.

This sequence belongs to the peptidase M20A family. DapE subfamily. In terms of assembly, homodimer. Zn(2+) serves as cofactor. It depends on Co(2+) as a cofactor.

The catalysed reaction is N-succinyl-(2S,6S)-2,6-diaminopimelate + H2O = (2S,6S)-2,6-diaminopimelate + succinate. It participates in amino-acid biosynthesis; L-lysine biosynthesis via DAP pathway; LL-2,6-diaminopimelate from (S)-tetrahydrodipicolinate (succinylase route): step 3/3. Its function is as follows. Catalyzes the hydrolysis of N-succinyl-L,L-diaminopimelic acid (SDAP), forming succinate and LL-2,6-diaminopimelate (DAP), an intermediate involved in the bacterial biosynthesis of lysine and meso-diaminopimelic acid, an essential component of bacterial cell walls. This chain is Succinyl-diaminopimelate desuccinylase, found in Shewanella sp. (strain MR-7).